The following is an 88-amino-acid chain: Small ribosomal subunit protein uS15 (88 aa).

This sequence belongs to the universal ribosomal protein uS15 family. Part of the 30S ribosomal subunit. Forms a bridge to the 50S subunit in the 70S ribosome, contacting the 23S rRNA.

In terms of biological role, one of the primary rRNA binding proteins, it binds directly to 16S rRNA where it helps nucleate assembly of the platform of the 30S subunit by binding and bridging several RNA helices of the 16S rRNA. Its function is as follows. Forms an intersubunit bridge (bridge B4) with the 23S rRNA of the 50S subunit in the ribosome. The protein is Small ribosomal subunit protein uS15 of Verminephrobacter eiseniae (strain EF01-2).